A 133-amino-acid chain; its full sequence is uncharacterized protein (133 aa).

The disordered stretch occupies residues 82–133; it reads KIKSYSPSRSQKALNNPSKIRTKQTNNDTTIQQSNNTTSTNTKPSSNTNTQQ. The span at 86 to 100 shows a compositional bias: polar residues; it reads YSPSRSQKALNNPSK. The segment covering 105–133 has biased composition (low complexity); the sequence is QTNNDTTIQQSNNTTSTNTKPSSNTNTQQ.

This is an uncharacterized protein from Acidianus convivator (ABV).